Here is a 102-residue protein sequence, read N- to C-terminus: MALLKANKDLISAGLKEFSVLLNQQVFNDPLVSEEDMVTVVEDWMNFYINYYRQQVTGEPQERDKALQELRQELNTLANPFLAKYRDFLKSHELPSHPPPSS.

It belongs to the AHSP family. In terms of assembly, monomer. Forms a heterodimer with free alpha-hemoglobin. Does not bind beta-hemoglobin nor alpha(2)beta(2) hemoglobin A. Expressed in blood and bone marrow.

It is found in the cytoplasm. Its function is as follows. Acts as a chaperone to prevent the harmful aggregation of alpha-hemoglobin during normal erythroid cell development. Specifically protects free alpha-hemoglobin from precipitation. It is predicted to modulate pathological states of alpha-hemoglobin excess such as beta-thalassemia. The protein is Alpha-hemoglobin-stabilizing protein (AHSP) of Homo sapiens (Human).